The chain runs to 154 residues: Large-conductance mechanosensitive channel (154 aa).

Transmembrane regions (helical) follow at residues 14 to 34 and 86 to 106; these read VVDL…VNSL and VFIN…FFVV.

The protein belongs to the MscL family. In terms of assembly, homopentamer.

It is found in the cell membrane. Functionally, channel that opens in response to stretch forces in the membrane lipid bilayer. May participate in the regulation of osmotic pressure changes within the cell. This is Large-conductance mechanosensitive channel from Dehalococcoides mccartyi (strain CBDB1).